The primary structure comprises 315 residues: MTTQQLKEKISKIIDNFSGIRVVFTTTANELKLSRIEGSALNSIAEGFIDKIKEDIINNEDLTSPLLSNFDDRKNALFKFDYEQYPEEFNKITQAIAIPPNSQDYYNPLNKFTDVKGIIILISGDNKCLALYKNKTNLAVLRNSRKMFNLVPDPDGYLKQLPNEILRLDFNYDLFSIGEDFYIKNHKTLETQMKFHQVIEAQAVIALNSLRDSLLIEDISGLEKSSREISFARKLAKISKHSPVLGKIDTKTIIDYVSQHKYLSAILQINEAGDKLLIKTKTSQKHFIKLMSDDYLQSDLTKIIYMSIAKDRLDE.

Component of antiviral defense system Kiwa, composed of KwaA and KwaB. Expression of Kiwa in E.coli (strain MG1655) confers resistance to phages lambda and SECphi18. The sequence is that of Kiwa protein KwaB from Escherichia coli O55:H7 (strain RM12579 / EPEC).